The following is a 315-amino-acid chain: Lipoyl synthase (315 aa).

[4Fe-4S] cluster contacts are provided by Cys62, Cys67, Cys73, Cys88, Cys92, Cys95, and Ser302. Residues Phe74 to Arg291 form the Radical SAM core domain.

The protein belongs to the radical SAM superfamily. Lipoyl synthase family. [4Fe-4S] cluster is required as a cofactor.

It localises to the cytoplasm. The catalysed reaction is [[Fe-S] cluster scaffold protein carrying a second [4Fe-4S](2+) cluster] + N(6)-octanoyl-L-lysyl-[protein] + 2 oxidized [2Fe-2S]-[ferredoxin] + 2 S-adenosyl-L-methionine + 4 H(+) = [[Fe-S] cluster scaffold protein] + N(6)-[(R)-dihydrolipoyl]-L-lysyl-[protein] + 4 Fe(3+) + 2 hydrogen sulfide + 2 5'-deoxyadenosine + 2 L-methionine + 2 reduced [2Fe-2S]-[ferredoxin]. The protein operates within protein modification; protein lipoylation via endogenous pathway; protein N(6)-(lipoyl)lysine from octanoyl-[acyl-carrier-protein]: step 2/2. In terms of biological role, catalyzes the radical-mediated insertion of two sulfur atoms into the C-6 and C-8 positions of the octanoyl moiety bound to the lipoyl domains of lipoate-dependent enzymes, thereby converting the octanoylated domains into lipoylated derivatives. This is Lipoyl synthase from Azoarcus sp. (strain BH72).